Here is a 187-residue protein sequence, read N- to C-terminus: Elongation factor P (187 aa).

The protein belongs to the elongation factor P family.

The protein resides in the cytoplasm. Its pathway is protein biosynthesis; polypeptide chain elongation. Functionally, involved in peptide bond synthesis. Stimulates efficient translation and peptide-bond synthesis on native or reconstituted 70S ribosomes in vitro. Probably functions indirectly by altering the affinity of the ribosome for aminoacyl-tRNA, thus increasing their reactivity as acceptors for peptidyl transferase. This Nocardioides sp. (strain ATCC BAA-499 / JS614) protein is Elongation factor P.